The chain runs to 919 residues: Isoleucine--tRNA ligase (919 aa).

The 'HIGH' region signature appears at 59-69 (PYANGHLHIGH). L-isoleucyl-5'-AMP is bound at residue E570. The 'KMSKS' region motif lies at 611–615 (KMSKS). K614 lines the ATP pocket. Residues C893, C896, C908, and C911 each contribute to the Zn(2+) site.

Belongs to the class-I aminoacyl-tRNA synthetase family. IleS type 1 subfamily. Monomer. Requires Zn(2+) as cofactor.

It localises to the cytoplasm. The enzyme catalyses tRNA(Ile) + L-isoleucine + ATP = L-isoleucyl-tRNA(Ile) + AMP + diphosphate. In terms of biological role, catalyzes the attachment of isoleucine to tRNA(Ile). As IleRS can inadvertently accommodate and process structurally similar amino acids such as valine, to avoid such errors it has two additional distinct tRNA(Ile)-dependent editing activities. One activity is designated as 'pretransfer' editing and involves the hydrolysis of activated Val-AMP. The other activity is designated 'posttransfer' editing and involves deacylation of mischarged Val-tRNA(Ile). The polypeptide is Isoleucine--tRNA ligase (Campylobacter curvus (strain 525.92)).